The primary structure comprises 126 residues: Profilin-3 (126 aa).

The protein belongs to the profilin family. Occurs in many kinds of cells as a complex with monomeric actin in a 1:1 ratio. In terms of tissue distribution, in embryos, expression is specifically detected in body wall muscle cells. In adults, expression is localized to a striking dot-like fashion in body wall muscle.

The protein localises to the cytoplasm. It is found in the cytoskeleton. In terms of biological role, binds to actin and affects the structure of the cytoskeleton. At high concentrations, profilin prevents the polymerization of actin, whereas it enhances it at low concentrations. By binding to PIP2, it inhibits the formation of IP3 and DG. Also binds to poly(L-proline) and phosphatidylinositol 4,5-bisphosphate micelles. The sequence is that of Profilin-3 (pfn-3) from Caenorhabditis elegans.